A 102-amino-acid chain; its full sequence is MDMNRIVLRLYITGNSVRSQQAIANIYRICQEDLGDQYNVEIIDVLEQPQRAEEEKIMVTPTLIKQLPPPLQRIIGDMSNTEKVLLGLDIVPEGLQVRLPED.

Belongs to the KaiB family. Purifies as a monomer and homotetramer. Interacts with KaiC1 and KaiC3.

Its function is as follows. A paralog of KaiB1, the major clock oscillator protein in this species. KaiB3 and KaiC3 may cross talk with the core oscillator. The monomer reduces the ATPase activity of KaiC3 by 55%, the homotetramer has no effect. A metamorphic protein which may reversibly switch between an inactive tetrameric fold and a rare thioredoxin-like monomeric fold (KaiB(fs)). The chain is Circadian clock protein KaiB3 from Synechocystis sp. (strain ATCC 27184 / PCC 6803 / Kazusa).